The sequence spans 789 residues: Glycerol-3-phosphate acyltransferase (789 aa).

The short motif at 276–281 (HRSYID) is the HXXXXD motif element.

The protein belongs to the GPAT/DAPAT family.

The protein resides in the cell membrane. The catalysed reaction is sn-glycerol 3-phosphate + an acyl-CoA = a 1-acyl-sn-glycero-3-phosphate + CoA. It functions in the pathway phospholipid metabolism; CDP-diacylglycerol biosynthesis; CDP-diacylglycerol from sn-glycerol 3-phosphate: step 1/3. This Mycobacterium bovis (strain ATCC BAA-935 / AF2122/97) protein is Glycerol-3-phosphate acyltransferase.